Reading from the N-terminus, the 989-residue chain is E3 ubiquitin-protein ligase Arkadia (989 aa).

Residues Lys-19, Lys-33, Lys-46, Lys-58, Lys-72, Lys-86, Lys-95, and Lys-109 each participate in a glycyl lysine isopeptide (Lys-Gly) (interchain with G-Cter in SUMO2) cross-link. The disordered stretch occupies residues 63-195 (FSHLCDDSQK…TEADPVPSLL (133 aa)). A compositionally biased stretch (basic and acidic residues) spans 65 to 88 (HLCDDSQKQEKDMTGNQQEQEKSG). The segment covering 97 to 109 (QQAGPSYVQNCVK) has biased composition (polar residues). Residues 110-120 (ENQEILGRRQQ) are compositionally biased toward basic and acidic residues. Residues 131–144 (SSLSECLSSPSSSL) show a composition bias toward low complexity. Lys-172 is covalently cross-linked (Glycyl lysine isopeptide (Lys-Gly) (interchain with G-Cter in SUMO2)). Over residues 173-183 (SRSHSARSHKW) the composition is skewed to basic residues. Residues Lys-197 and Lys-217 each participate in a glycyl lysine isopeptide (Lys-Gly) (interchain with G-Cter in SUMO2) cross-link. Residues 213–293 (KRLVKSSSSQ…PSNPAAPSGS (81 aa)) are disordered. Residues 240–402 (ALAQRKYALL…VPTTSARMDS (163 aa)) are interaction with AXIN1. Low complexity-rich tracts occupy residues 248–270 (LLSS…SSST) and 278–291 (ASAS…AAPS). The SUMO interaction motif 1 (SIM) signature appears at 298-302 (VVVIE). An SUMO interaction motif 2 (SIM) motif is present at residues 323–329 (EVEIVTV). The tract at residues 335-367 (SRSTLGHSRSHWSQGSSSHTGRPQESRNRSRIS) is disordered. The span at 345-355 (HWSQGSSSHTG) shows a compositional bias: low complexity. The SUMO interaction motif 3 (SIM) signature appears at 380 to 384 (VVDLT). Disordered regions lie at residues 388–475 (DEPT…MPRL), 506–559 (HGHH…YHDQ), and 641–675 (MPPP…PPPQ). The segment covering 393–451 (VPTTSARMDSQTTSASINNSNPSTSEQASDTTSTVASSQPSTVSETEATLTSNSATGSS) has biased composition (polar residues). Over residues 506 to 520 (HGHHFQHHHHHHHTP) the composition is skewed to basic residues. Residues 548–558 (ANSSSGSSYHD) show a composition bias toward polar residues. The interval 902 to 904 (YPH) is ubiquitin binding. Residues Lys-918 and Lys-922 each participate in a glycyl lysine isopeptide (Lys-Gly) (interchain with G-Cter in SUMO2) cross-link. Zn(2+) contacts are provided by Cys-937 and Cys-940. The RING-type; atypical zinc-finger motif lies at 937–978 (CTICLSILEEGEDVRRLPCMHLFHQVCVDQWLITNKKCPICR). The ubiquitin binding stretch occupies residues 952–956 (RLPCM). 2 residues coordinate Zn(2+): His-960 and Cys-963.

It belongs to the Arkadia family. As to quaternary structure, monomer. Interacts with SMAD6, SMAD7, AXIN1, AXIN2 and SKIL isoform SNON. Interacts with (phosphorylated) SMAD2 and SMAD3. Part of a complex containing RNF111, AXIN1 and SMAD7. Interacts (via SIM domains) with SUMO1 and SUMO2. Ubiquitously expressed.

The protein localises to the nucleus. It localises to the cytoplasm. The protein resides in the PML body. It carries out the reaction S-ubiquitinyl-[E2 ubiquitin-conjugating enzyme]-L-cysteine + [acceptor protein]-L-lysine = [E2 ubiquitin-conjugating enzyme]-L-cysteine + N(6)-ubiquitinyl-[acceptor protein]-L-lysine.. It functions in the pathway protein modification; protein ubiquitination. Binds free ubiquitin non-covalently via its RING-type zinc finger. Ubiquitin-binding leads to enhance the E3 ubiquitin-protein ligase activity by stabilizing the ubiquitin-conjugating enzyme E2 (donor ubiquitin) in the 'closed' conformation and activating ubiquitin transfer. E3 ubiquitin-protein ligase required for mesoderm patterning during embryonic development. Acts as an enhancer of the transcriptional responses of the SMAD2/SMAD3 effectors, which are activated downstream of BMP. Acts by mediating ubiquitination and degradation of SMAD inhibitors such as SMAD7, inducing their proteasomal degradation and thereby enhancing the transcriptional activity of TGF-beta and BMP. In addition to enhance transcription of SMAD2/SMAD3 effectors, also regulates their turnover by mediating their ubiquitination and subsequent degradation, coupling their activation with degradation, thereby ensuring that only effectors 'in use' are degraded. Activates SMAD3/SMAD4-dependent transcription by triggering signal-induced degradation of SNON isoform of SKIL. Associates with UBE2D2 as an E2 enzyme. Specifically binds polysumoylated chains via SUMO interaction motifs (SIMs) and mediates ubiquitination of sumoylated substrates. Catalyzes 'Lys-63'-linked ubiquitination of sumoylated XPC in response to UV irradiation, promoting nucleotide excision repair. Mediates ubiquitination and degradation of sumoylated PML. The regulation of the BMP-SMAD signaling is however independent of sumoylation and is not dependent of SUMO interaction motifs (SIMs). The protein is E3 ubiquitin-protein ligase Arkadia of Mus musculus (Mouse).